The chain runs to 237 residues: Sugar fermentation stimulation protein homolog (237 aa).

It belongs to the SfsA family.

This is Sugar fermentation stimulation protein homolog from Pseudomonas syringae pv. tomato (strain ATCC BAA-871 / DC3000).